We begin with the raw amino-acid sequence, 101 residues long: MAKVSSIKKNESRKKKSQSLHNKRSALKSKIYDKNISLEERFSLVMSLAQLPRNSSSTRIRNRCELTGRPRGVTRKFGISRNKLRELIGRGLVPGVVKSSW.

The segment at 1–26 (MAKVSSIKKNESRKKKSQSLHNKRSA) is disordered. The segment covering 11-26 (ESRKKKSQSLHNKRSA) has biased composition (basic residues).

The protein belongs to the universal ribosomal protein uS14 family. As to quaternary structure, part of the 30S ribosomal subunit. Contacts proteins S3 and S10.

In terms of biological role, binds 16S rRNA, required for the assembly of 30S particles and may also be responsible for determining the conformation of the 16S rRNA at the A site. This is Small ribosomal subunit protein uS14 from Rickettsia felis (strain ATCC VR-1525 / URRWXCal2) (Rickettsia azadi).